Here is a 1051-residue protein sequence, read N- to C-terminus: Kinesin-like protein KIN-UC (1051 aa).

Composition is skewed to low complexity over residues 1-12 (MSSSNSSSAVRS), 28-39 (NSNHAVSLSSSS), and 64-90 (SASS…PVRR). Disordered stretches follow at residues 1-39 (MSSS…SSSS) and 51-109 (PGIA…RVSV). The Kinesin motor domain maps to 104–441 (RVRVSVRVRP…IMFGQRAMKI (338 aa)). 189 to 196 (GQTGTGKT) serves as a coordination point for ATP. The D-BOX motif lies at 411–419 (RTSLIITIG). 2 coiled-coil regions span residues 452 to 534 (DYES…QKDQ) and 568 to 761 (DTSQ…KRYM). A compositionally biased stretch (basic and acidic residues) spans 753–766 (NVVEEKRYMKEDLS). Residues 753-788 (NVVEEKRYMKEDLSKGSAESGAQTGSQRSQGLKKSL) are disordered. Residues 772-788 (SGAQTGSQRSQGLKKSL) show a composition bias toward polar residues. ARM repeat units follow at residues 792 to 831 (RATM…NLAA), 833 to 873 (EANQ…NLAM), and 875 to 915 (EKSQ…NLCG). Residues 917–956 (EKFLKLLKEEEGIKGLLTMAQSGNIDIIAQVARGMANFAK) form an ARM 4; degenerate repeat.

This sequence belongs to the TRAFAC class myosin-kinesin ATPase superfamily. Kinesin family. Ungrouped subfamily. As to quaternary structure, interacts (via C-terminus) with NEK5. In terms of tissue distribution, expressed in young root hair-forming cells and in root hair-producing cells at the boundary between the hypocotyl and root. Expressed in cotyledons, young leaves, trichomes and flowers.

It localises to the cytoplasm. The protein resides in the cytoskeleton. The protein localises to the spindle. It is found in the phragmoplast. Acts as a plus-end microtubule-dependent motor protein. Involved in the control of root hair tip growth by promoting microtubule depolymerization and limiting the accumulation of endoplasmic microtubules. In vitro, binds to polymerized actin through ARM repeats, and to polymerized tubulin through N-terminal motor domain. This chain is Kinesin-like protein KIN-UC, found in Arabidopsis thaliana (Mouse-ear cress).